The sequence spans 238 residues: 1-(5-phosphoribosyl)-5-[(5-phosphoribosylamino)methylideneamino] imidazole-4-carboxamide isomerase (238 aa).

Aspartate 8 functions as the Proton acceptor in the catalytic mechanism. Aspartate 130 functions as the Proton donor in the catalytic mechanism.

This sequence belongs to the HisA/HisF family.

The protein resides in the cytoplasm. It catalyses the reaction 1-(5-phospho-beta-D-ribosyl)-5-[(5-phospho-beta-D-ribosylamino)methylideneamino]imidazole-4-carboxamide = 5-[(5-phospho-1-deoxy-D-ribulos-1-ylimino)methylamino]-1-(5-phospho-beta-D-ribosyl)imidazole-4-carboxamide. Its pathway is amino-acid biosynthesis; L-histidine biosynthesis; L-histidine from 5-phospho-alpha-D-ribose 1-diphosphate: step 4/9. The sequence is that of 1-(5-phosphoribosyl)-5-[(5-phosphoribosylamino)methylideneamino] imidazole-4-carboxamide isomerase from Methanococcus vannielii (strain ATCC 35089 / DSM 1224 / JCM 13029 / OCM 148 / SB).